A 364-amino-acid polypeptide reads, in one-letter code: Ribosomal RNA large subunit methyltransferase F (364 aa).

Residues 1 to 17 (MPKPAIKTAAKPATSSA) are compositionally biased toward low complexity. Residues 1-53 (MPKPAIKTAAKPATSSAGKRGKPITPKSVAKPQAAKPKTVSKPKVKPGEKKRL) form a disordered region. A compositionally biased stretch (basic residues) spans 39-53 (TVSKPKVKPGEKKRL).

The protein belongs to the methyltransferase superfamily. METTL16/RlmF family.

The protein localises to the cytoplasm. The enzyme catalyses adenosine(1618) in 23S rRNA + S-adenosyl-L-methionine = N(6)-methyladenosine(1618) in 23S rRNA + S-adenosyl-L-homocysteine + H(+). In terms of biological role, specifically methylates the adenine in position 1618 of 23S rRNA. The sequence is that of Ribosomal RNA large subunit methyltransferase F from Shewanella sp. (strain MR-4).